The following is a 163-amino-acid chain: Nucleotide-binding protein Acel_0286 (163 aa).

This sequence belongs to the YajQ family.

In terms of biological role, nucleotide-binding protein. The chain is Nucleotide-binding protein Acel_0286 from Acidothermus cellulolyticus (strain ATCC 43068 / DSM 8971 / 11B).